Consider the following 194-residue polypeptide: uncharacterized protein (194 aa).

CBS domains follow at residues 13-72 (MSFP…PKDV) and 78-133 (MSKK…LLEI). One can recognise an ACP-type MB domain in the interval 159–192 (YINGICENCGYQGRVRLYQGRYLCDECIEEFEEK). 4 residues coordinate Fe cation: C164, C167, C182, and C185. Zn(2+)-binding residues include C164, C167, C182, and C185.

This is an uncharacterized protein from Methanocaldococcus jannaschii (strain ATCC 43067 / DSM 2661 / JAL-1 / JCM 10045 / NBRC 100440) (Methanococcus jannaschii).